We begin with the raw amino-acid sequence, 193 residues long: 3-isopropylmalate dehydratase small subunit (193 aa).

This sequence belongs to the LeuD family. LeuD type 1 subfamily. Heterodimer of LeuC and LeuD.

It carries out the reaction (2R,3S)-3-isopropylmalate = (2S)-2-isopropylmalate. The protein operates within amino-acid biosynthesis; L-leucine biosynthesis; L-leucine from 3-methyl-2-oxobutanoate: step 2/4. Functionally, catalyzes the isomerization between 2-isopropylmalate and 3-isopropylmalate, via the formation of 2-isopropylmaleate. In Listeria innocua serovar 6a (strain ATCC BAA-680 / CLIP 11262), this protein is 3-isopropylmalate dehydratase small subunit.